Reading from the N-terminus, the 557-residue chain is Membrane protein insertase YidC (557 aa).

The helical transmembrane segment at 3–23 (NLRPVLYLSMLLVLFLIWQAW) threads the bilayer. Residues 34-60 (APGAQEQVMDRDGVPAPPQDVPDAPVS) form a disordered region. Helical transmembrane passes span 366 to 386 (VVGN…LVFY), 436 to 456 (LGGC…YWVL), 480 to 500 (YFIL…LNPA), and 514 to 534 (PFVF…YWFV).

It belongs to the OXA1/ALB3/YidC family. Type 1 subfamily. As to quaternary structure, interacts with the Sec translocase complex via SecD. Specifically interacts with transmembrane segments of nascent integral membrane proteins during membrane integration.

The protein localises to the cell inner membrane. Its function is as follows. Required for the insertion and/or proper folding and/or complex formation of integral membrane proteins into the membrane. Involved in integration of membrane proteins that insert both dependently and independently of the Sec translocase complex, as well as at least some lipoproteins. Aids folding of multispanning membrane proteins. The polypeptide is Membrane protein insertase YidC (Thioalkalivibrio sulfidiphilus (strain HL-EbGR7)).